The sequence spans 942 residues: Apolipoprotein B receptor (942 aa).

Disordered stretches follow at residues 66–212 (GLRS…VTED), 240–269 (ERMV…QAML), 283–487 (DSLG…SPER), 501–607 (AGPE…VPWE), and 671–942 (EGRG…PKPQ). Basic and acidic residues-rich tracts occupy residues 106-123 (QAER…DARG), 132-143 (PEAEPGTHRDRS), 240-252 (ERMV…ERAR), 312-330 (EADK…EAEV), and 338-352 (EAER…HIAE). Acidic residues predominate over residues 353 to 370 (EEAMGEQETEGSFEDEER). A Phosphoserine modification is found at S364. A compositionally biased stretch (basic and acidic residues) spans 384-397 (EEVRAEESSREKRN). Positions 415–425 (PDWEDSPEVST) are enriched in acidic residues. Composition is skewed to basic and acidic residues over residues 444 to 458 (LRVK…ELVR) and 466 to 475 (QLEEGQKGQE). S484 and S520 each carry phosphoserine. Composition is skewed to basic and acidic residues over residues 514–531 (GVDR…EAGK) and 672–687 (GRGE…ETTE). The span at 709–721 (QEIDGTEEGEQAE) shows a compositional bias: acidic residues. Positions 837-853 (SRLDVSVPRSRVLLSRS) are enriched in low complexity. Residues 854 to 863 (SSRRRSRPSF) show a composition bias toward basic residues.

Homodimer. Post-translationally, there are 2 forms in macrophages, the membrane-binding proteins 200 kDa (MBP 200) and 235 kDa (MBP 235), that can be reduced into a single active ligand-binding species with intermediate mobility (MBP 200R). As to expression, highly expressed in spleen, lung and skeletal muscle, and weakly in brain, heart, kidney, and testis.

It localises to the cell membrane. Its function is as follows. Macrophage receptor that binds to the apolipoprotein B48 (APOB) of dietary triglyceride (TG)-rich lipoproteins (TRL) or to a like domain of APOB in hypertriglyceridemic very low density lipoprotein (HTG-VLDL). Binds and internalizes TRL when out of the context of the macrophage. May provide essential lipids to reticuloendothelial cells. Could also be involved in foam cell formation with elevated TRL and remnant lipoprotein (RLP). Mediates the rapid high-affinity uptake of chylomicrons (CM), HTG-VLDL, and trypsinized (tryp) VLDL devoid of APOE in vitro in macrophages. This chain is Apolipoprotein B receptor, found in Mus musculus (Mouse).